The primary structure comprises 108 residues: BH3-like motif-containing cell death inducer (108 aa).

The BH3-like signature appears at leucine 5 to isoleucine 12.

Ubiquitously expressed.

It localises to the cytoplasm. The protein localises to the mitochondrion. Functions as a proapoptotic molecule through the caspase-dependent mitochondrial pathway of cell death. The sequence is that of BH3-like motif-containing cell death inducer (BLID) from Homo sapiens (Human).